We begin with the raw amino-acid sequence, 157 residues long: Jacalin-related lectin 15 (157 aa).

The 140-residue stretch at 13–152 (ADKLEAKGGN…LTSLGAYFAP (140 aa)) folds into the Jacalin-type lectin domain.

It belongs to the jacalin lectin family. As to expression, expressed in stems, leaves and flowers. Not detected in roots.

Its function is as follows. Confers broad resistance to potexviruses. Inhibits virus accumulation at the cellular level. The protein is Jacalin-related lectin 15 (JAL15) of Arabidopsis thaliana (Mouse-ear cress).